A 256-amino-acid polypeptide reads, in one-letter code: Protein FixA (256 aa).

This sequence belongs to the ETF beta-subunit/FixA family. In terms of assembly, heterodimer of FixA and FixB.

It participates in amine and polyamine metabolism; carnitine metabolism. Functionally, required for anaerobic carnitine reduction. May bring reductant to CaiA. In Escherichia coli O139:H28 (strain E24377A / ETEC), this protein is Protein FixA.